The chain runs to 304 residues: Hairy/enhancer-of-split related with YRPW motif protein 1 (304 aa).

A disordered region spans residues 1-52 (MKRAHPEYSSSESELDETIEVEKESADENGNLSSALGSMSPTTSSQILARKR). Residues 28–47 (ENGNLSSALGSMSPTTSSQI) are compositionally biased toward polar residues. Residues 48-117 (LARKRRRGII…GGKGYFDAHA (70 aa)) are transcriptional repression and interaction with NCOR1 and SIN3A. Positions 49 to 104 (ARKRRRGIIEKRRRDRINNSLSELRRLVPSAFEKQGSAKLEKAEILQMTVDHLKML) constitute a bHLH domain. Positions 122-158 (YRSLGFRECLAEVARYLSIIEGLDASDPLRVRLVSHL) constitute an Orange domain. A compositionally biased stretch (polar residues) spans 197–211 (SQSTHGNTGTSASPT). The segment at 197–234 (SQSTHGNTGTSASPTESHHQGRLATAHPEASALRAPPS) is disordered. The short motif at 294–297 (YRPW) is the YRPW motif element.

This sequence belongs to the HEY family. Self-associates. Interacts with HES1 and HEYL. Interacts with HDAC1, NCOR1 and SIN3A. Interacts with GATA4 and GATA6. Interacts with CCDC89/BOIP.

The protein resides in the nucleus. Functionally, transcriptional repressor which binds preferentially to the canonical E box sequence 5'-CACGTG-3'. Downstream effector of Notch signaling required for cardiovascular development. Specifically required for the Notch-induced endocardial epithelial to mesenchymal transition, which is itself criticial for cardiac valve and septum development. May be required in conjunction with HEY2 to specify arterial cell fate or identity. Promotes maintenance of neuronal precursor cells and glial versus neuronal fate specification. Represses transcription by the cardiac transcriptional activators GATA4 and GATA6 and by the neuronal bHLH factors ASCL1/MASH1 and NEUROD4/MATH3. This is Hairy/enhancer-of-split related with YRPW motif protein 1 (HEY1) from Bos taurus (Bovine).